The sequence spans 374 residues: Alcohol dehydrogenase 1 (374 aa).

N-acetylserine is present on Ser-1. Zn(2+)-binding residues include Cys-46, His-67, Cys-97, Cys-100, Cys-103, Cys-111, and Cys-174. NAD(+)-binding positions include 199–204 (GLGGVG), Asp-223, Lys-228, 292–294 (VGV), and Arg-369.

This sequence belongs to the zinc-containing alcohol dehydrogenase family. Class-I subfamily. Homodimer. Zn(2+) is required as a cofactor.

Its subcellular location is the cytoplasm. It carries out the reaction a primary alcohol + NAD(+) = an aldehyde + NADH + H(+). The catalysed reaction is a secondary alcohol + NAD(+) = a ketone + NADH + H(+). This chain is Alcohol dehydrogenase 1 (ADH1), found in Struthio camelus (Common ostrich).